A 274-amino-acid chain; its full sequence is Ribose-5-phosphate isomerase (274 aa).

This sequence belongs to the ribose 5-phosphate isomerase family.

Its subcellular location is the cytoplasm. The catalysed reaction is aldehydo-D-ribose 5-phosphate = D-ribulose 5-phosphate. Its pathway is carbohydrate degradation; pentose phosphate pathway; D-ribose 5-phosphate from D-ribulose 5-phosphate (non-oxidative stage): step 1/1. In Schizosaccharomyces pombe (strain 972 / ATCC 24843) (Fission yeast), this protein is Ribose-5-phosphate isomerase (rki1).